We begin with the raw amino-acid sequence, 931 residues long: Chitin synthase III (931 aa).

N37 and N94 each carry an N-linked (GlcNAc...) asparagine glycan. A disordered region spans residues P93–L154. A compositionally biased stretch (gly residues) spans G102–G122. N558 carries N-linked (GlcNAc...) asparagine glycosylation. The next 5 membrane-spanning stretches (helical) occupy residues F585–L605, I644–A664, I677–L697, V731–L751, and S759–F779. N802 is a glycosylation site (N-linked (GlcNAc...) asparagine). 2 helical membrane passes run T858–D878 and F899–L919.

The protein belongs to the chitin synthase family. Class III subfamily. As to expression, highly expressed in conidia and during appressorium formation.

The protein localises to the cell membrane. It catalyses the reaction [(1-&gt;4)-N-acetyl-beta-D-glucosaminyl](n) + UDP-N-acetyl-alpha-D-glucosamine = [(1-&gt;4)-N-acetyl-beta-D-glucosaminyl](n+1) + UDP + H(+). Polymerizes chitin, a structural polymer of the cell wall and septum, by transferring the sugar moiety of UDP-GlcNAc to the non-reducing end of the growing chitin polymer. Contributes to the production of conidia and the ability of fungal conidia to germinate. Involved in the fungal cell wall integrity and the ability of conidia to withstand biophysical pressure. Required for appressorium formation and evasion of insect cellular and/or humoral defenses, promoting the fungal dimorphic transition to the production of hyphal bodies that occurs within hosts, and ultimately to virulence. This chain is Chitin synthase III, found in Metarhizium acridum (strain CQMa 102).